A 1529-amino-acid polypeptide reads, in one-letter code: Mediator of RNA polymerase II transcription subunit 1.1 (1529 aa).

Disordered regions lie at residues 685–740, 807–919, and 933–1529; these read PDAA…VVGE, QYRM…MRDN, and PDIE…IDDE. Positions 693 to 702 are enriched in basic residues; sequence GKQRKPRAKK. Low complexity-rich tracts occupy residues 722–739 and 807–828; these read GAAA…GVVG and QYRM…PQQQ. Over residues 894 to 905 the composition is skewed to pro residues; the sequence is TPSPLSAPPKPF. A compositionally biased stretch (basic and acidic residues) spans 908-919; it reads EQHHFGTKMRDN. Low complexity-rich tracts occupy residues 958-990 and 1008-1023; these read SSSS…TAQT and QEQA…IQQQ. Positions 1008–1032 form a coiled coil; the sequence is QEQALQKQEQQRIQQQDSVDSTNSE. 3 stretches are compositionally biased toward polar residues: residues 1051-1061, 1068-1089, and 1096-1105; these read NQVNRVMNMSN, GSST…STGS, and TPGTSSNIAQ. Basic and acidic residues-rich tracts occupy residues 1113 to 1130, 1137 to 1185, 1192 to 1240, and 1262 to 1278; these read LKKE…EKLI, LKVD…ERDK, RDRT…KELS, and PKKD…KDES. Residues 1169 to 1202 adopt a coiled-coil conformation; the sequence is EKEDKSQREKDKKERDKERKRRDRDRTEAKKEKD. The segment covering 1279–1288 has biased composition (low complexity); the sequence is IPGPSTSSES. Basic and acidic residues predominate over residues 1289 to 1304; sequence STRKEVAPAPISRKES. A compositionally biased stretch (low complexity) spans 1349–1365; that stretch reads SYSGSSNAGPISSSSRG. 2 stretches are compositionally biased toward pro residues: residues 1375 to 1386 and 1477 to 1500; these read PVLPPPALPMRG and QPPP…APPS.

The protein belongs to the Mediator complex subunit 1 family. Component of the Mediator complex.

It is found in the nucleus. Functionally, component of the Mediator complex, a coactivator involved in the regulated transcription of nearly all RNA polymerase II-dependent genes. Mediator functions as a bridge to convey information from gene-specific regulatory proteins to the basal RNA polymerase II transcription machinery. Mediator is recruited to promoters by direct interactions with regulatory proteins and serves as a scaffold for the assembly of a functional preinitiation complex with RNA polymerase II and the general transcription factors. This Caenorhabditis briggsae protein is Mediator of RNA polymerase II transcription subunit 1.1 (sop-3).